The chain runs to 154 residues: Myoglobin (154 aa).

The Globin domain occupies 2 to 148 (VLSDGEWQLV…FRKDIAAKYK (147 aa)). Ser4 is subject to Phosphoserine. Residue His65 coordinates nitrite. Residue His65 participates in O2 binding. The residue at position 68 (Thr68) is a Phosphothreonine. His94 lines the heme b pocket.

The protein belongs to the globin family. In terms of assembly, monomeric.

It is found in the cytoplasm. The protein localises to the sarcoplasm. It carries out the reaction Fe(III)-heme b-[protein] + nitric oxide + H2O = Fe(II)-heme b-[protein] + nitrite + 2 H(+). The enzyme catalyses H2O2 + AH2 = A + 2 H2O. Functionally, monomeric heme protein which primary function is to store oxygen and facilitate its diffusion within muscle tissues. Reversibly binds oxygen through a pentacoordinated heme iron and enables its timely and efficient release as needed during periods of heightened demand. Depending on the oxidative conditions of tissues and cells, and in addition to its ability to bind oxygen, it also has a nitrite reductase activity whereby it regulates the production of bioactive nitric oxide. Under stress conditions, like hypoxia and anoxia, it also protects cells against reactive oxygen species thanks to its pseudoperoxidase activity. The protein is Myoglobin of Balaena mysticetus (Bowhead whale).